The primary structure comprises 68 residues: Alpha-conotoxin-like Ca1.2 (68 aa).

The signal sequence occupies residues 1–21 (MGMRMMFTVFLLVVLATTVVS). Positions 22-48 (FTSDRASEGRNAAAKDKASDLVALTVR) are excised as a propeptide. 2 cysteine pairs are disulfide-bonded: Cys-50-Cys-56 and Cys-51-Cys-64. Positions 52–54 (AIR) are lacks the Ser-Xaa-Pro motif that is crucial for potent interaction with nAChR. Sulfotyrosine is present on Tyr-63. Cys-64 is subject to Cysteine amide. Residues 65 to 68 (GGIY) constitute a propeptide that is removed on maturation.

The protein belongs to the conotoxin A superfamily. As to expression, expressed by the venom duct.

The protein resides in the secreted. In terms of biological role, alpha-conotoxins act on postsynaptic membranes, they bind to the nicotinic acetylcholine receptors (nAChR) and thus inhibit them. Has possibly a distinct nAChR binding mode from other alpha-conotoxins, due to a different three residue motif (lacks the Ser-Xaa-Pro motif). The polypeptide is Alpha-conotoxin-like Ca1.2 (Conus caracteristicus (Characteristic cone)).